A 178-amino-acid polypeptide reads, in one-letter code: Large ribosomal subunit protein uL6 (178 aa).

Belongs to the universal ribosomal protein uL6 family. Part of the 50S ribosomal subunit.

This protein binds to the 23S rRNA, and is important in its secondary structure. It is located near the subunit interface in the base of the L7/L12 stalk, and near the tRNA binding site of the peptidyltransferase center. The polypeptide is Large ribosomal subunit protein uL6 (Nitratiruptor sp. (strain SB155-2)).